Here is a 200-residue protein sequence, read N- to C-terminus: Small ribosomal subunit protein eS8A (200 aa).

Disordered regions lie at residues methionine 1–proline 40 and serine 123–alanine 145. Residues lysine 135–alanine 145 are compositionally biased toward basic residues.

This sequence belongs to the eukaryotic ribosomal protein eS8 family. As to quaternary structure, component of the small ribosomal subunit (SSU). Mature yeast ribosomes consist of a small (40S) and a large (60S) subunit. The 40S small subunit contains 1 molecule of ribosomal RNA (18S rRNA) and at least 33 different proteins. The large 60S subunit contains 3 rRNA molecules (25S, 5.8S and 5S rRNA) and at least 46 different proteins.

Its subcellular location is the cytoplasm. Component of the ribosome, a large ribonucleoprotein complex responsible for the synthesis of proteins in the cell. The small ribosomal subunit (SSU) binds messenger RNAs (mRNAs) and translates the encoded message by selecting cognate aminoacyl-transfer RNA (tRNA) molecules. The large subunit (LSU) contains the ribosomal catalytic site termed the peptidyl transferase center (PTC), which catalyzes the formation of peptide bonds, thereby polymerizing the amino acids delivered by tRNAs into a polypeptide chain. The nascent polypeptides leave the ribosome through a tunnel in the LSU and interact with protein factors that function in enzymatic processing, targeting, and the membrane insertion of nascent chains at the exit of the ribosomal tunnel. The sequence is that of Small ribosomal subunit protein eS8A (rps801) from Schizosaccharomyces pombe (strain 972 / ATCC 24843) (Fission yeast).